Consider the following 92-residue polypeptide: Small integral membrane protein 12 (92 aa).

A helical transmembrane segment spans residues Tyr-12–Phe-34.

Belongs to the SMIM12 family.

The protein localises to the membrane. The chain is Small integral membrane protein 12 (SMIM12) from Bos taurus (Bovine).